The primary structure comprises 151 residues: Putative pre-16S rRNA nuclease (151 aa).

This sequence belongs to the YqgF nuclease family.

It is found in the cytoplasm. Functionally, could be a nuclease involved in processing of the 5'-end of pre-16S rRNA. The sequence is that of Putative pre-16S rRNA nuclease from Neisseria gonorrhoeae (strain ATCC 700825 / FA 1090).